Consider the following 70-residue polypeptide: Putative membrane protein insertion efficiency factor (70 aa).

This sequence belongs to the UPF0161 family.

It is found in the cell membrane. Its function is as follows. Could be involved in insertion of integral membrane proteins into the membrane. This Rubrobacter xylanophilus (strain DSM 9941 / JCM 11954 / NBRC 16129 / PRD-1) protein is Putative membrane protein insertion efficiency factor.